The sequence spans 362 residues: Homoserine O-acetyltransferase FUB5 (362 aa).

An AB hydrolase-1 domain is found at 12-335 (NVMIICHALS…VSDDGHDAFL (324 aa)). Ser110 (nucleophile) is an active-site residue. Residues 195–232 (RFGRDTGNKKKTQQQDSKTIPNNGTPIHSQGGADETPV) form a disordered region. Polar residues predominate over residues 208–222 (QQDSKTIPNNGTPIH). Active-site residues include Asp302 and His331.

Belongs to the AB hydrolase superfamily. MetX family.

The catalysed reaction is L-homoserine + acetyl-CoA = O-acetyl-L-homoserine + CoA. It functions in the pathway mycotoxin biosynthesis. In terms of biological role, homoserine O-acetyltransferase; part of the gene cluster that mediates the biosynthesis of fusaric acid, a mycotoxin with low to moderate toxicity to animals and humans, but with high phytotoxic properties. L-aspartate is suggested as fusaric acid amino acid precursor that is activated and further processed to O-acetyl-L-homoserine by cluster enzymes aspartate kinase FUB3 and homoserine O-acetyltransferase FUB5, as well as enzymes of the primary metabolism. The polyketide synthase (PKS) FUB1 generates the triketide trans-2-hexenal which is presumptively released by the hydrolase FUB4 and linked to the NRPS-bound amino acid precursor by NAD(P)-dependent dehydrogenase FUB6. FUB1, FUB4, and the non-canonical NRPS Fub8 may form an enzyme complex. Further processing of the NRPS-bound intermediate might be carried out by FUB6 and the O-acetylhomoserine FUB7, enabling a spontaneous electrocyclization to close the carbon backbone of fusaric acid. Dihydrofusaric acid is likely to be released via reduction by the thioester reductase (TR) domain of FUB8 whereupon the final oxidation to fusaric acid may (also) be performed by the FMN-dependent dehydrogenase FUB9. The polypeptide is Homoserine O-acetyltransferase FUB5 (Fusarium oxysporum f. sp. lycopersici (strain 4287 / CBS 123668 / FGSC 9935 / NRRL 34936) (Fusarium vascular wilt of tomato)).